Here is a 66-residue protein sequence, read N- to C-terminus: Large ribosomal subunit protein bL33 (66 aa).

This sequence belongs to the bacterial ribosomal protein bL33 family.

This Prochlorococcus marinus (strain MIT 9303) protein is Large ribosomal subunit protein bL33.